The primary structure comprises 177 residues: Putative membrane protein 165 (177 aa).

The Intravirion segment spans residues 1–7 (MYLVLLI). Residues 8 to 24 (AVILFIIVILMIFLISG) traverse the membrane as a helical segment. Residues 25–166 (LFYPEQEPAL…DPHPALKSKN (142 aa)) lie on the Virion surface side of the membrane.

This sequence belongs to the asfivirus envelope protein p22 family.

The protein resides in the virion membrane. The protein localises to the host cell membrane. In African swine fever virus (isolate Pig/Kenya/KEN-50/1950) (ASFV), this protein is Putative membrane protein 165.